The following is a 265-amino-acid chain: Type 1 encapsulin shell protein (265 aa).

FMN-binding positions include 79 to 81 (RAT), Trp87, and 90 to 94 (DNLER). Residues 184–189 (EAGHYP) are pore-forming loop. FMN is bound at residue Glu235.

This sequence belongs to the encapsulin family. Family 1 subfamily. Homomultimeric. This encapsulin nanocompartment is formed by 60 subunits; monomers form 12 pentamers which assemble to form shells. There are 12 pores where the pentamers meet as well as 3-fold axis channels and dimer channels; none are larger than 3-4 Angstroms in diameter. The N-terminus of the protein is inside the shell, the C-terminus is outside. Probably 3, 4 or 5 Flp cargo decamers bind inside the encapulin nanocompartment. FMN is required as a cofactor.

It localises to the encapsulin nanocompartment. Proteolysis activated by calcium and cobalt. Functionally, shell component of a type 1 encapsulin nanocompartment. Assembles into proteinaceous shells 23-24 nm in diameter with 2-2.5 nm thick walls. Cargo protein Flp (ferritin-like protein, probably stores iron) is targeted to the interior via its C-terminal extension; empty intact shells can be isolated in the absence of cargo protein. Fe(2+) may be able to pass though the 5-fold and dimer channels in the protein shell. In terms of biological role, protease that exhibits activity toward chymotrypsin and trypsin substrates. Probably does not have antibacterial activity. In Thermotoga maritima (strain ATCC 43589 / DSM 3109 / JCM 10099 / NBRC 100826 / MSB8), this protein is Type 1 encapsulin shell protein.